Reading from the N-terminus, the 517-residue chain is Sterol 14-alpha demethylase CYP51C (517 aa).

The helical transmembrane segment at 10–30 (TLPLSVSIPLTTSIIIILSIV) threads the bilayer. Tyr115 contributes to the lanosterol binding site. Position 300 (Gly300) interacts with itraconazole. Position 458 (Cys458) interacts with heme.

It belongs to the cytochrome P450 family. Heme serves as cofactor.

Its subcellular location is the endoplasmic reticulum membrane. Its pathway is steroid metabolism; ergosterol biosynthesis. Its function is as follows. Together with cyp51A and cyp51B, encodes the sterol 14alpha-demethylase that plays a critical role in the third module of ergosterol biosynthesis pathway, being ergosterol the major sterol component in fungal membranes that participates in a variety of functions. Cyp51C does not seem to encode an active sterol 14-alpha-demethylase, but can impact indirectly on sterol 14alpha-demethylation, and is required for full virulence on host wheat ears, but not on Arabidopsis floral tissue or the fruits of apple and tomato. The third module or late pathway involves the ergosterol synthesis itself through consecutive reactions that mainly occur in the endoplasmic reticulum (ER) membrane. In filamentous fungi, during the initial step of this module, lanosterol (lanosta-8,24-dien-3beta-ol) can be metabolized to eburicol. Sterol 14alpha-demethylase catalyzes the three-step oxidative removal of the 14alpha-methyl group (C-32) of both these sterols in the form of formate, and converts eburicol and lanosterol to 14-demethyleburicol (4,4,24-trimethylergosta-8,14,24(28)-trienol) and 4,4-dimethyl-5alpha-cholesta-8,14,24-trien-3beta-ol, respectively, which are further metabolized by other enzymes in the pathway to ergosterol. This Gibberella zeae (strain ATCC MYA-4620 / CBS 123657 / FGSC 9075 / NRRL 31084 / PH-1) (Wheat head blight fungus) protein is Sterol 14-alpha demethylase CYP51C.